Here is a 944-residue protein sequence, read N- to C-terminus: Putative ATP-dependent RNA helicase (944 aa).

The Helicase ATP-binding domain occupies 66–235 (TTPRSPIDGI…VPLHNLLMKL (170 aa)). An ATP-binding site is contributed by 79–86 (HGVGTGKT). The DEAH box signature appears at 183–186 (DEAH). The 73-residue stretch at 451 to 523 (CLTREVMTVP…QIIGRGIRYQ (73 aa)) folds into the Helicase C-terminal domain.

The protein belongs to the DEAD box helicase family. DEAH subfamily.

It catalyses the reaction ATP + H2O = ADP + phosphate + H(+). In Heliothis virescens ascovirus 3e (HvAV-3e), this protein is Putative ATP-dependent RNA helicase.